The primary structure comprises 604 residues: Serine/threonine-protein kinase A-Raf (604 aa).

The 73-residue stretch at 19 to 91 (GTVKVYLPNK…DGEELIVEVL (73 aa)) folds into the RBD domain. A Phorbol-ester/DAG-type zinc finger spans residues 98-144 (MHNFVRKTFFSLAFCDFCLKFLFHGFRCQTCGYKFHQHCSSKVPTVC). Zn(2+) is bound by residues His-99, Cys-112, Cys-115, Cys-125, Cys-128, His-133, Cys-136, and Cys-144. Phosphoserine is present on residues Ser-157 and Ser-162. Disordered regions lie at residues 177–222 (NELL…HMVS) and 241–288 (TDAA…EKKK). Phosphothreonine is present on Thr-181. The residue at position 186 (Ser-186) is a Phosphoserine. Over residues 210-222 (IRSTSTPNVHMVS) the composition is skewed to polar residues. A compositionally biased stretch (low complexity) spans 252 to 265 (PRGSPSPASVSSGR). Phosphoserine occurs at positions 255 and 267. Over residues 272–287 (LPSEQRERKSLADEKK) the composition is skewed to basic and acidic residues. Positions 308–568 (VQLLKRIGTG…PQILATIELL (261 aa)) constitute a Protein kinase domain. ATP contacts are provided by residues 314-322 (IGTGSFGTV) and Lys-334. Thr-316 is modified (phosphothreonine). Catalysis depends on Asp-427, which acts as the Proton acceptor.

Belongs to the protein kinase superfamily. TKL Ser/Thr protein kinase family. RAF subfamily. Interacts with TH1L/NELFD. Zn(2+) serves as cofactor. Post-translationally, dephosphorylation by the SHOC2-MRAS-PP1c (SMP) complex consisting of SHOC2, GTP-bound M-Ras/MRAS and the catalytic subunit of protein phosphatase 1 (PPP1CA, PPP1CB or PPP1CC); this relieves inactivation and stimulates kinase activity.

The enzyme catalyses L-seryl-[protein] + ATP = O-phospho-L-seryl-[protein] + ADP + H(+). It catalyses the reaction L-threonyl-[protein] + ATP = O-phospho-L-threonyl-[protein] + ADP + H(+). Involved in the transduction of mitogenic signals from the cell membrane to the nucleus. May also regulate the TOR signaling cascade. Phosphorylates PFKFB2. The sequence is that of Serine/threonine-protein kinase A-Raf (Araf) from Mus musculus (Mouse).